Reading from the N-terminus, the 244-residue chain is Ribosomal RNA small subunit methyltransferase G (244 aa).

Residues Gly-79, Phe-84, 102-104 (DST), 130-131 (AE), and Arg-149 each bind S-adenosyl-L-methionine. The interval 225 to 244 (DRYPRREGVPNQQPLFWSAK) is disordered. The segment covering 234–244 (PNQQPLFWSAK) has biased composition (polar residues).

The protein belongs to the methyltransferase superfamily. RNA methyltransferase RsmG family.

The protein resides in the cytoplasm. Functionally, specifically methylates the N7 position of a guanine in 16S rRNA. The chain is Ribosomal RNA small subunit methyltransferase G from Deinococcus deserti (strain DSM 17065 / CIP 109153 / LMG 22923 / VCD115).